The following is a 25-amino-acid chain: Snake venom metalloproteinase catroxase (25 aa).

Glu9 provides a ligand contact to Ca(2+).

It belongs to the venom metalloproteinase (M12B) family. Monomer. Zn(2+) serves as cofactor. Expressed by the venom gland.

The protein resides in the secreted. Inhibited by EDTA, beta-mercaptoethanol, but not by PMSF, p-tosyl-L-phenylalanine chloromethyl ketone, p-tosyl-L-lysine chloromethyl ketone, soybean trypsin inhibitor and aprotinin. Its function is as follows. Metalloprotease that is highly active against alpha-(FGA) and beta-chains (FGB) of fibrinogen molecules. This chain is Snake venom metalloproteinase catroxase, found in Crotalus atrox (Western diamondback rattlesnake).